Here is a 143-residue protein sequence, read N- to C-terminus: ATP synthase epsilon chain (143 aa).

This sequence belongs to the ATPase epsilon chain family. As to quaternary structure, F-type ATPases have 2 components, CF(1) - the catalytic core - and CF(0) - the membrane proton channel. CF(1) has five subunits: alpha(3), beta(3), gamma(1), delta(1), epsilon(1). CF(0) has three main subunits: a, b and c.

Its subcellular location is the cell inner membrane. Functionally, produces ATP from ADP in the presence of a proton gradient across the membrane. This Dichelobacter nodosus (strain VCS1703A) protein is ATP synthase epsilon chain.